Reading from the N-terminus, the 98-residue chain is Protein E7 (98 aa).

Positions M1–G42 are E7 terminal domain. Positions L23 to E27 match the LXCXE motif; interaction with host RB1 and TMEM173/STING motif. The segment at C58 to C94 is a zinc-finger region. The short motif at I76 to L84 is the Nuclear export signal element.

This sequence belongs to the papillomaviridae E7 protein family. In terms of assembly, homodimer. Homooligomer. Interacts with host RB1; this interaction induces dissociation of RB1-E2F1 complex thereby disrupting RB1 activity. Interacts with host EP300; this interaction represses EP300 transcriptional activity. Interacts with protein E2; this interaction inhibits E7 oncogenic activity. Interacts with host TMEM173/STING; this interaction impairs the ability of TMEM173/STING to sense cytosolic DNA and promote the production of type I interferon (IFN-alpha and IFN-beta). Post-translationally, highly phosphorylated.

The protein localises to the host cytoplasm. Its subcellular location is the host nucleus. Plays a role in viral genome replication by driving entry of quiescent cells into the cell cycle. Stimulation of progression from G1 to S phase allows the virus to efficiently use the cellular DNA replicating machinery to achieve viral genome replication. E7 protein has both transforming and trans-activating activities. Induces the disassembly of the E2F1 transcription factor from RB1, with subsequent transcriptional activation of E2F1-regulated S-phase genes. Interferes with host histone deacetylation mediated by HDAC1 and HDAC2, leading to transcription activation. Also plays a role in the inhibition of both antiviral and antiproliferative functions of host interferon alpha. Interaction with host TMEM173/STING impairs the ability of TMEM173/STING to sense cytosolic DNA and promote the production of type I interferon (IFN-alpha and IFN-beta). This is Protein E7 from Homo sapiens (Human).